A 207-amino-acid chain; its full sequence is Nuclear transcription factor Y subunit beta (207 aa).

The a domain stretch occupies residues 1–52 (MTMDGDSSTTDASQLGISADYIGGSHYVIQPHDDTEDSMNDHEDTNGSKESF). Residues 27–52 (YVIQPHDDTEDSMNDHEDTNGSKESF) form a disordered region. Basic and acidic residues predominate over residues 39–52 (MNDHEDTNGSKESF). The segment at 53 to 142 (REQDIYLPIA…PLKLYLQKFR (90 aa)) is b domain. A DNA-binding region spans residues 59 to 65 (LPIANVA). Positions 86-97 (VQECVSEFISFI) are subunit association domain (SAD). A Glycyl lysine isopeptide (Lys-Gly) (interchain with G-Cter in ubiquitin) cross-link involves residue Lys140. Residues 143–207 (EAMKGEKGIG…ISGVQQIQFS (65 aa)) form a c domain region.

The protein belongs to the NFYB/HAP3 subunit family. Heterotrimeric transcription factor composed of three components, NF-YA, NF-YB and NF-YC. NF-YB and NF-YC must interact and dimerize for NF-YA association and DNA binding. Interacts with C1QBP. Post-translationally, monoubiquitination at Lys-140 plays an important role in transcriptional activation by allowing the deposition of histone H3 methylations as well as histone H2B monoubiquitination at 'Lys-121'.

The protein localises to the nucleus. Its function is as follows. Component of the sequence-specific heterotrimeric transcription factor (NF-Y) which specifically recognizes a 5'-CCAAT-3' box motif found in the promoters of its target genes. NF-Y can function as both an activator and a repressor, depending on its interacting cofactors. In Homo sapiens (Human), this protein is Nuclear transcription factor Y subunit beta (NFYB).